The following is a 354-amino-acid chain: Phosphate acyltransferase (354 aa).

Belongs to the PlsX family. As to quaternary structure, homodimer. Probably interacts with PlsY.

The protein resides in the cytoplasm. It carries out the reaction a fatty acyl-[ACP] + phosphate = an acyl phosphate + holo-[ACP]. Its pathway is lipid metabolism; phospholipid metabolism. Its function is as follows. Catalyzes the reversible formation of acyl-phosphate (acyl-PO(4)) from acyl-[acyl-carrier-protein] (acyl-ACP). This enzyme utilizes acyl-ACP as fatty acyl donor, but not acyl-CoA. In Nitrobacter hamburgensis (strain DSM 10229 / NCIMB 13809 / X14), this protein is Phosphate acyltransferase.